The chain runs to 568 residues: Small ribosomal subunit protein bS1 (568 aa).

S1 motif domains are found at residues 39–100, 118–184, 205–273, 290–360, 377–447, and 464–533; these read KTVV…LSRE, GEFV…VSRR, GMIL…LGIK, GKKM…LSIK, GTII…LGIK, and GTIV…LSVK.

It belongs to the bacterial ribosomal protein bS1 family.

In terms of biological role, binds mRNA; thus facilitating recognition of the initiation point. It is needed to translate mRNA with a short Shine-Dalgarno (SD) purine-rich sequence. The sequence is that of Small ribosomal subunit protein bS1 (rpsA) from Rickettsia typhi (strain ATCC VR-144 / Wilmington).